A 951-amino-acid chain; its full sequence is Leucine-rich repeat-containing G-protein coupled receptor 4 (951 aa).

An N-terminal signal peptide occupies residues 1-19 (MPGPLGLLCFLALGLRGSA). At 20–544 (EPSGAAPPLC…LLGSWMIRLT (525 aa)) the chain is on the extracellular side. The LRRNT domain occupies 25–57 (APPLCAAPCSCDGDRRVDCSGKGLTAVPEGLSA). 2 cysteine pairs are disulfide-bonded: Cys-29/Cys-35 and Cys-33/Cys-43. LRR repeat units lie at residues 35 to 58 (CDGD…LSAF), 59 to 79 (TQLL…AFKN), 81 to 103 (PFLE…ALSG), 104 to 127 (LKEL…AIRG), 128 to 151 (LSSL…SFEG), 153 to 175 (TQLR…PLSN), 176 to 199 (LPTL…AFTN), 201 to 223 (SSLV…CFDG), 224 to 247 (LDNL…IKAL), 248 to 270 (PSLK…AFDG), and 272 to 294 (PLLK…AFHN). The N-linked (GlcNAc...) asparagine glycan is linked to Asn-68. Residue Asn-199 is glycosylated (N-linked (GlcNAc...) asparagine). Asn-294 and Asn-314 each carry an N-linked (GlcNAc...) asparagine glycan. LRR repeat units lie at residues 318-341 (TVRL…LCQE), 342-363 (QKRL…SFNG), 364-387 (CHAL…TFQG), 388-411 (LTSL…AFAK), and 413-435 (GSIT…GLNG). The cysteines at positions 339 and 364 are disulfide-linked. Intrachain disulfides connect Cys-470–Cys-522 and Cys-471–Cys-476. A helical membrane pass occupies residues 545-565 (VWFIFLVALFFNLLVILTTFA). Topologically, residues 566–575 (SCTSVPSSKL) are cytoplasmic. The helical transmembrane segment at 576 to 596 (FIGLISVSNLFMGAYTGILTF) threads the bilayer. Residues 597–619 (LDAVSWGRFAEFGIWWEIGSGCK) are Extracellular-facing. The cysteines at positions 618 and 693 are disulfide-linked. Residues 620–640 (IAGFLAVFSSESAIFLLMLAA) form a helical membrane-spanning segment. Residues 641 to 661 (VERSLSAKDMMKNGKSNHLRQ) lie on the Cytoplasmic side of the membrane. The helical transmembrane segment at 662 to 682 (FRIAALLAFLGAAVAGSFPLF) threads the bilayer. Residues 683-703 (HRGEYSASPLCLPFPTGETPS) lie on the Extracellular side of the membrane. The helical transmembrane segment at 704–724 (LGFTVTLVLLNSLAFLLMAII) threads the bilayer. At 725–756 (YTKLYCNLEKEDLSESSQSSMIKHVAWLIFTN) the chain is on the cytoplasmic side. A helical transmembrane segment spans residues 757-777 (CIFFCPVAFFSFAPLITAVSI). The Extracellular segment spans residues 778–783 (SPEIMK). Residues 784 to 804 (SVTLIFFPLPACLNPVLYVFF) traverse the membrane as a helical segment. Topologically, residues 805–951 (NPKFKEDWKL…YAYNLPRVKD (147 aa)) are cytoplasmic. Residue Ser-920 is modified to Phosphoserine.

Belongs to the G-protein coupled receptor 1 family.

Its subcellular location is the cell membrane. Receptor for R-spondins that potentiates the canonical Wnt signaling pathway and is involved in the formation of various organs. Upon binding to R-spondins (RSPO1, RSPO2, RSPO3 or RSPO4), associates with phosphorylated LRP6 and frizzled receptors that are activated by extracellular Wnt receptors, triggering the canonical Wnt signaling pathway to increase expression of target genes. In contrast to classical G-protein coupled receptors, does not activate heterotrimeric G-proteins to transduce the signal. Its function as activator of the Wnt signaling pathway is required for the development of various organs, including liver, kidney, intestine, bone, reproductive tract and eye. May also act as a receptor for norrin (NDP), such results however required additional confirmation in vivo. Required during spermatogenesis to activate the Wnt signaling pathway in peritubular myoid cells. Required for the maintenance of intestinal stem cells and Paneth cell differentiation in postnatal intestinal crypts. Acts as a regulator of bone formation and remodeling. Involved in kidney development; required for maintaining the ureteric bud in an undifferentiated state. Involved in the development of the anterior segment of the eye. Required during erythropoiesis. Also acts as a negative regulator of innate immunity by inhibiting TLR2/TLR4 associated pattern-recognition and pro-inflammatory cytokine production. Plays an important role in regulating the circadian rhythms of plasma lipids, partially through regulating the rhythmic expression of MTTP. Required for proper development of GnRH neurons (gonadotropin-releasing hormone expressing neurons) that control the release of reproductive hormones from the pituitary gland. The sequence is that of Leucine-rich repeat-containing G-protein coupled receptor 4 (LGR4) from Bos taurus (Bovine).